We begin with the raw amino-acid sequence, 87 residues long: Mu-theraphotoxin-Cg1a (87 aa).

An N-terminal signal peptide occupies residues 1–21; sequence MKVLVLITLAVLGAMFVWTSA. The propeptide occupies 22–50; that stretch reads AELEERGSDQRDSPAWVKSMERIFQSEER. Disulfide bonds link C52/C66, C59/C71, and C65/C79.

Belongs to the neurotoxin 10 (Hwtx-1) family. 39 (Jztx-34) subfamily. Expressed by the venom gland.

It localises to the secreted. Its function is as follows. Potent and selective inhibitor of hNav1.7/SCN9A (IC(50)=610 nM). Also shows a weak activity towards Nav1.3/SCN3A (IC(50)=7950 nM). In addition, inhibits voltage-gated potassium channels (Kv) in rat DRG neurons. It does not alter the voltage dependence of activation, but it causes a small hyperpolarizing shift in the steady-state inactivations of Nav1.7/SNC9A. Chimera experiments show that the toxin binds to the DIIS3-S4 linker (site 4) of Nav1.7/SCN9A, whereas Nav1.7/SCN9A Asp-827 residue is shown by substitution experiments to be critical for its sensitivity. The toxin traps the domain II voltage sensor in the closed configuration, and not in an outward position. In vivo, shows analgesic activity in three rodent pain models (formalin-induced, acid-induced, and thermal). This is Mu-theraphotoxin-Cg1a from Chilobrachys guangxiensis (Chinese earth tiger tarantula).